The chain runs to 430 residues: S-adenosylmethionine synthase (430 aa).

An ATP-binding site is contributed by H14. D16 is a binding site for Mg(2+). Residue E42 participates in K(+) binding. E55 and Q98 together coordinate L-methionine. The flexible loop stretch occupies residues 98–108 (QSADINRGVER). ATP-binding positions include 164-166 (DAK), 254-255 (KF), D263, 269-270 (RK), A286, and K290. D263 provides a ligand contact to L-methionine. K294 lines the L-methionine pocket.

This sequence belongs to the AdoMet synthase family. In terms of assembly, homotetramer; dimer of dimers. Mg(2+) is required as a cofactor. K(+) serves as cofactor.

The protein resides in the cytoplasm. The enzyme catalyses L-methionine + ATP + H2O = S-adenosyl-L-methionine + phosphate + diphosphate. It functions in the pathway amino-acid biosynthesis; S-adenosyl-L-methionine biosynthesis; S-adenosyl-L-methionine from L-methionine: step 1/1. Functionally, catalyzes the formation of S-adenosylmethionine (AdoMet) from methionine and ATP. The overall synthetic reaction is composed of two sequential steps, AdoMet formation and the subsequent tripolyphosphate hydrolysis which occurs prior to release of AdoMet from the enzyme. This is S-adenosylmethionine synthase from Phocaeicola vulgatus (strain ATCC 8482 / DSM 1447 / JCM 5826 / CCUG 4940 / NBRC 14291 / NCTC 11154) (Bacteroides vulgatus).